The primary structure comprises 337 residues: Cytoskeleton protein RodZ (337 aa).

Topologically, residues 1–111 are cytoplasmic; sequence MNTEATHDQN…LGKRRKKRDG (111 aa). An HTH cro/C1-type domain is found at 19 to 71; that stretch reads LRNAREQLGLSQQAVAERLCLKVSTVRDIEEDKAPADLASTFLRGYIRSYARL. A DNA-binding region (H-T-H motif) is located at residues 30–49; the sequence is QQAVAERLCLKVSTVRDIEE. The helical; Signal-anchor for type II membrane protein transmembrane segment at 112-132 threads the bilayer; the sequence is WLMTFTWLVLFVVIGLSGAWW. Residues 133–337 lie on the Periplasmic side of the membrane; the sequence is WQDHKAQQEE…TLNAEQSPAQ (205 aa). Polar residues predominate over residues 145-167; it reads TMADQSSAELSSNSEQGQSVPLN. A disordered region spans residues 145-236; that stretch reads TMADQSSAEL…TAATTPDGAA (92 aa). Over residues 168–207 the composition is skewed to low complexity; that stretch reads TSTTTDPATTSTPPASVDTTATNTQTPAVTAPAPAVDPQQ. A compositionally biased stretch (polar residues) spans 208–218; sequence NAVVSPSQANV. Positions 219–236 are enriched in low complexity; it reads DTAATPAPTAATTPDGAA.

This sequence belongs to the RodZ family.

The protein resides in the cell inner membrane. In terms of biological role, cytoskeletal protein that is involved in cell-shape control through regulation of the length of the long axis. This is Cytoskeleton protein RodZ from Escherichia coli O139:H28 (strain E24377A / ETEC).